The sequence spans 569 residues: Urease subunit alpha (569 aa).

In terms of domain architecture, Urease spans 131 to 569 (GGIDTHIHFI…LPLAQRYLLL (439 aa)). Residues H136, H138, and K219 each contribute to the Ni(2+) site. Residue K219 is modified to N6-carboxylysine. Residue H221 participates in substrate binding. Residues H248 and H274 each coordinate Ni(2+). The Proton donor role is filled by H322. Position 362 (D362) interacts with Ni(2+).

The protein belongs to the metallo-dependent hydrolases superfamily. Urease alpha subunit family. As to quaternary structure, heterotrimer of UreA (gamma), UreB (beta) and UreC (alpha) subunits. Three heterotrimers associate to form the active enzyme. The cofactor is Ni cation. Post-translationally, carboxylation allows a single lysine to coordinate two nickel ions.

Its subcellular location is the cytoplasm. The enzyme catalyses urea + 2 H2O + H(+) = hydrogencarbonate + 2 NH4(+). It functions in the pathway nitrogen metabolism; urea degradation; CO(2) and NH(3) from urea (urease route): step 1/1. The polypeptide is Urease subunit alpha (Synechococcus sp. (strain CC9311)).